We begin with the raw amino-acid sequence, 760 residues long: Translocation protein SEC63 homolog (760 aa).

Residues 1–14 lie on the Lumenal side of the membrane; that stretch reads MAGQQFQYDDSGNT. The chain crosses the membrane as a helical span at residues 15 to 35; it reads FFYFLTSFVGLIVIPATYYLW. At 36–69 the chain is on the cytoplasmic side; it reads PRDQNAEQIRLKNIRKVYGRCMWYRLRLLKPQPN. A helical membrane pass occupies residues 70 to 90; that stretch reads IIPTVKKIVLLAGWALFLFLA. At 91–188 the chain is on the lumenal side; the sequence is YKVSKTDREY…LPAWIVDQKN (98 aa). Residues 104–165 enclose the J domain; the sequence is NPYEVLNLDP…ESRKNWEEFG (62 aa). Residues 189–209 traverse the membrane as a helical segment; it reads SILVLLVYGLAFMVILPVVVG. The SEC63 1 domain maps to 197–541; the sequence is GLAFMVILPV…LKKKPTPVLL (345 aa). Over 210 to 760 the chain is Cytoplasmic; the sequence is SWWYRSIRYS…EEEEEEEDDD (551 aa). Positions 492-617 are disordered; the sequence is AEEQPAEDGQ…DDEAEWQELQ (126 aa). Residues 518 to 536 are compositionally biased toward basic residues; that stretch reads KGPKKTAKSKKKKPLKKKP. Thr537 bears the Phosphothreonine mark. The segment covering 582–608 has biased composition (basic and acidic residues); that stretch reads NRDSQSEKDDGSDRDSDREQDEKQNKD. Residues 597–635 adopt a coiled-coil conformation; the sequence is SDREQDEKQNKDDEAEWQELQQSIQRKERALLETKSKIT. One can recognise an SEC63 2 domain in the interval 637–714; it reads PVYSLYFPEE…GLDQIKPLKL (78 aa). The segment at 720–760 is disordered; it reads KPVPENHPQWDTAIEGDEDQEDSEGFEDSFEEEEEEEEDDD. Acidic residues predominate over residues 733–760; sequence IEGDEDQEDSEGFEDSFEEEEEEEEDDD. 2 positions are modified to phosphoserine: Ser742 and Ser748.

In terms of assembly, the ER translocon complex consists of channel-forming core components SEC61A1, SEC61B and SEC61G and different auxiliary components such as SEC62 and SEC63. As to expression, widely expressed, with high levels in the liver.

It is found in the endoplasmic reticulum membrane. Its function is as follows. Mediates cotranslational and post-translational transport of certain precursor polypeptides across endoplasmic reticulum (ER). Proposed to play an auxiliary role in recognition of precursors with short and apolar signal peptides. May cooperate with SEC62 and HSPA5/BiP to facilitate targeting of small presecretory proteins into the SEC61 channel-forming translocon complex, triggering channel opening for polypeptide translocation to the ER lumen. Required for efficient PKD1/Polycystin-1 biogenesis and trafficking to the plasma membrane of the primary cilia. The polypeptide is Translocation protein SEC63 homolog (Homo sapiens (Human)).